Here is a 1065-residue protein sequence, read N- to C-terminus: Outer capsid protein VP3 (1065 aa).

It localises to the virion. It carries out the reaction a 5'-end diphospho-ribonucleoside in mRNA + GTP + H(+) = a 5'-end (5'-triphosphoguanosine)-ribonucleoside in mRNA + diphosphate. It catalyses the reaction a 5'-end (5'-triphosphoguanosine)-ribonucleoside in mRNA + S-adenosyl-L-methionine = a 5'-end (N(7)-methyl 5'-triphosphoguanosine)-ribonucleoside in mRNA + S-adenosyl-L-homocysteine. Its function is as follows. Outer capsid protein involved in mRNA capping. Catalyzes the last 3 enzymatic activities for formation of the 5' cap structure on the viral plus-strand transcripts, namely the RNA guanylyltransferase, RNA-7N- and RNA-2'O-methyltransferase activities. This chain is Outer capsid protein VP3 (S3), found in Cryphonectria parasitica mycoreovirus 1 (strain 9B21) (CpMYRV-1).